Consider the following 1142-residue polypeptide: Protein lin-25 (1142 aa).

A compositionally biased stretch (acidic residues) spans isoleucine 600–proline 613. A disordered region spans residues isoleucine 600–threonine 706. Basic and acidic residues-rich tracts occupy residues glutamate 614–glutamate 627, aspartate 652–threonine 662, and aspartate 679–leucine 703.

It localises to the nucleus. It is found in the cytoplasm. Its function is as follows. Participates in the inductive signaling pathway downstream of let-60 Ras and the RAF/MAP kinase cascade to regulate specification and differentiation of many cell types. Positively regulates the fate of vulval precursor cells. Required for induction of the P12 and excretory duct cell fates. In males, it is also required for proper formation of spicules. Does not function in the signaling pathway that promotes exit from pachytene. The chain is Protein lin-25 from Caenorhabditis briggsae.